The chain runs to 230 residues: RNA chaperone ProQ (230 aa).

The segment at 106–181 (AKARVQAQRA…EERHTPVSDI (76 aa)) is disordered. Residues 146–155 (RRKDNAERKP) show a composition bias toward basic and acidic residues. A compositionally biased stretch (low complexity) spans 158-167 (AKPAAAAKPS).

Belongs to the ProQ family.

It localises to the cytoplasm. Its function is as follows. RNA chaperone with significant RNA binding, RNA strand exchange and RNA duplexing activities. May regulate ProP activity through an RNA-based, post-transcriptional mechanism. This chain is RNA chaperone ProQ, found in Cronobacter sakazakii (strain ATCC BAA-894) (Enterobacter sakazakii).